We begin with the raw amino-acid sequence, 250 residues long: 2,3-bisphosphoglycerate-dependent phosphoglycerate mutase (250 aa).

Substrate-binding positions include 8–15, 21–22, Arg60, 87–90, Lys98, 114–115, and 183–184; these read RHGESKWN, TG, ERHY, RR, and GN. The active-site Tele-phosphohistidine intermediate is the His9. Catalysis depends on Glu87, which acts as the Proton donor/acceptor.

Belongs to the phosphoglycerate mutase family. BPG-dependent PGAM subfamily.

It carries out the reaction (2R)-2-phosphoglycerate = (2R)-3-phosphoglycerate. Its pathway is carbohydrate degradation; glycolysis; pyruvate from D-glyceraldehyde 3-phosphate: step 3/5. Functionally, catalyzes the interconversion of 2-phosphoglycerate and 3-phosphoglycerate. This Borrelia recurrentis (strain A1) protein is 2,3-bisphosphoglycerate-dependent phosphoglycerate mutase.